Consider the following 423-residue polypeptide: Mannose-6-phosphate isomerase (423 aa).

At A2 the chain carries N-acetylalanine. Phosphoserine occurs at positions 102 and 108. 4 residues coordinate Zn(2+): Q110, H112, E137, and H276. Residue R295 is part of the active site.

This sequence belongs to the mannose-6-phosphate isomerase type 1 family. Zn(2+) serves as cofactor. In terms of tissue distribution, expressed in all tissues, but more abundant in testis.

Its subcellular location is the cytoplasm. The enzyme catalyses D-mannose 6-phosphate = D-fructose 6-phosphate. It participates in nucleotide-sugar biosynthesis; GDP-alpha-D-mannose biosynthesis; alpha-D-mannose 1-phosphate from D-fructose 6-phosphate: step 1/2. Isomerase that catalyzes the interconversion of fructose-6-P and mannose-6-P and has a critical role in the supply of D-mannose derivatives required for many eukaryotic glycosylation reactions. This is Mannose-6-phosphate isomerase from Mus musculus (Mouse).